A 495-amino-acid chain; its full sequence is UDP-N-acetylmuramoyl-L-alanyl-D-glutamate--2,6-diaminopimelate ligase (495 aa).

UDP-N-acetyl-alpha-D-muramoyl-L-alanyl-D-glutamate-binding positions include Leu27, Ser29, and 44 to 46 (HQA). Residue 116–122 (GTNGKTT) participates in ATP binding. UDP-N-acetyl-alpha-D-muramoyl-L-alanyl-D-glutamate contacts are provided by residues Asn157, 158 to 159 (TT), Ser185, Gln191, and Arg193. Position 225 is an N6-carboxylysine (Lys225). Meso-2,6-diaminopimelate-binding positions include Arg390, 414-417 (DNPR), Gly465, and Glu469. The Meso-diaminopimelate recognition motif signature appears at 414-417 (DNPR).

The protein belongs to the MurCDEF family. MurE subfamily. The cofactor is Mg(2+). Carboxylation is probably crucial for Mg(2+) binding and, consequently, for the gamma-phosphate positioning of ATP.

The protein localises to the cytoplasm. It carries out the reaction UDP-N-acetyl-alpha-D-muramoyl-L-alanyl-D-glutamate + meso-2,6-diaminopimelate + ATP = UDP-N-acetyl-alpha-D-muramoyl-L-alanyl-gamma-D-glutamyl-meso-2,6-diaminopimelate + ADP + phosphate + H(+). Its pathway is cell wall biogenesis; peptidoglycan biosynthesis. Functionally, catalyzes the addition of meso-diaminopimelic acid to the nucleotide precursor UDP-N-acetylmuramoyl-L-alanyl-D-glutamate (UMAG) in the biosynthesis of bacterial cell-wall peptidoglycan. The chain is UDP-N-acetylmuramoyl-L-alanyl-D-glutamate--2,6-diaminopimelate ligase from Shigella flexneri.